The sequence spans 190 residues: Transcription factor E (190 aa).

The HTH TFE/IIEalpha-type domain maps to 4–87 (KNKALLEIAK…YWHLETKRLP (84 aa)). The segment at 170–190 (PSPKKEKKKTRAKAKRKTRKK) is disordered. Residues 174–190 (KEKKKTRAKAKRKTRKK) are compositionally biased toward basic residues.

The protein belongs to the TFE family. In terms of assembly, monomer. Interaction with RNA polymerase subunits RpoF and RpoE is necessary for Tfe stimulatory transcription activity. Able to interact with Tbp and RNA polymerase in the absence of DNA promoter. Interacts both with the preinitiation and elongation complexes.

Functionally, transcription factor that plays a role in the activation of archaeal genes transcribed by RNA polymerase. Facilitates transcription initiation by enhancing TATA-box recognition by TATA-box-binding protein (Tbp), and transcription factor B (Tfb) and RNA polymerase recruitment. Not absolutely required for transcription in vitro, but particularly important in cases where Tbp or Tfb function is not optimal. It dynamically alters the nucleic acid-binding properties of RNA polymerases by stabilizing the initiation complex and destabilizing elongation complexes. Seems to translocate with the RNA polymerase following initiation and acts by binding to the non template strand of the transcription bubble in elongation complexes. This Pyrococcus abyssi (strain GE5 / Orsay) protein is Transcription factor E.